The primary structure comprises 159 residues: Protein Smg homolog (159 aa).

The protein belongs to the Smg family.

The polypeptide is Protein Smg homolog (Vibrio parahaemolyticus serotype O3:K6 (strain RIMD 2210633)).